Reading from the N-terminus, the 335-residue chain is Ferrochelatase (335 aa).

Residues histidine 192 and glutamate 291 each coordinate Fe cation.

This sequence belongs to the ferrochelatase family.

The protein resides in the cytoplasm. The enzyme catalyses heme b + 2 H(+) = protoporphyrin IX + Fe(2+). Its pathway is porphyrin-containing compound metabolism; protoheme biosynthesis; protoheme from protoporphyrin-IX: step 1/1. Catalyzes the ferrous insertion into protoporphyrin IX. The protein is Ferrochelatase of Bdellovibrio bacteriovorus (strain ATCC 15356 / DSM 50701 / NCIMB 9529 / HD100).